Here is a 437-residue protein sequence, read N- to C-terminus: ATP-dependent protease ATPase subunit HslU (437 aa).

ATP is bound by residues V18, 60–65, D250, E315, and R387; that span reads GCGKTE.

This sequence belongs to the ClpX chaperone family. HslU subfamily. As to quaternary structure, a double ring-shaped homohexamer of HslV is capped on each side by a ring-shaped HslU homohexamer. The assembly of the HslU/HslV complex is dependent on binding of ATP.

The protein localises to the cytoplasm. ATPase subunit of a proteasome-like degradation complex; this subunit has chaperone activity. The binding of ATP and its subsequent hydrolysis by HslU are essential for unfolding of protein substrates subsequently hydrolyzed by HslV. HslU recognizes the N-terminal part of its protein substrates and unfolds these before they are guided to HslV for hydrolysis. The protein is ATP-dependent protease ATPase subunit HslU of Methylorubrum extorquens (strain PA1) (Methylobacterium extorquens).